A 258-amino-acid chain; its full sequence is UPF0246 protein plu0566 (258 aa).

It belongs to the UPF0246 family.

This Photorhabdus laumondii subsp. laumondii (strain DSM 15139 / CIP 105565 / TT01) (Photorhabdus luminescens subsp. laumondii) protein is UPF0246 protein plu0566.